The chain runs to 526 residues: MLRRKVSTLLMTALITTSFLNSKPVYANPVTKSKDNNLKEVQQVTSKSNKNKNQKVTIMYYCDADNNLEGSLLNDIEEMKTGYKDSPNLNLIALVDRSPRYSSDEKVLGEDFSDTRLYKIEHNKANRLDGKNEFPEISTTSKYEANMGDPEVLKKFIDYCKSNYEADKYVLIMANHGGGAREKSNPRLNRAICWDDSNLDKNGEADCLYMGEISDHLTEKQSVDLLAFDACLMGTAEVAYQYRPGNGGFSADTLVASSPVVWGPGFKYDKIFDRIKAGGGTNNEDDLTLGGKEQNFDPATITNEQLGALFVEEQRDSTHANGRYDQHLSFYDLKKAESVKRAIDNLAVNLSNENKKSEIEKLRGSGIHTDLMHYFDEYSEGEWVEYPYFDVYDLCEKINKSENFSSKTKDLASNAMNKLNEMIVYSFGDPSNNFKEGKNGLSIFLPNGDKKYSTYYTSTKIPHWTMQSWYNSIDTVKYGLNPYGKLSWCKDGQDPEINKVGNWFELLDSWFDKTNDVTGGVNHYQW.

The N-terminal stretch at 1 to 27 is a signal peptide; that stretch reads MLRRKVSTLLMTALITTSFLNSKPVYA. Positions 28-50 are excised as a propeptide; it reads NPVTKSKDNNLKEVQQVTSKSNK. The propeptide at 182–190 is linker; sequence EKSNPRLNR. C231 acts as the Nucleophile in catalysis.

This sequence belongs to the peptidase C11 family. In terms of assembly, heterodimer of a light chain and a heavy chain held together by strong non-covalent forces rather than by intramolecular disulfide bridges.

The enzyme catalyses Preferential cleavage: Arg-|-Xaa, including Arg-|-Pro bond, but not Lys-|-Xaa.. Its function is as follows. Cysteine endopeptidase with strict specificity. The polypeptide is Clostripain (cloSI) (Hathewaya histolytica (Clostridium histolyticum)).